The sequence spans 247 residues: Uridylate kinase (247 aa).

Position 18–21 (18–21 (KLSG)) interacts with ATP. Gly60 serves as a coordination point for UMP. The ATP site is built by Gly61 and Arg65. UMP-binding positions include Asp80 and 141–148 (TGNPFFTT). ATP is bound by residues Thr168, Tyr174, and Asp177.

This sequence belongs to the UMP kinase family. Homohexamer.

The protein localises to the cytoplasm. The catalysed reaction is UMP + ATP = UDP + ADP. Its pathway is pyrimidine metabolism; CTP biosynthesis via de novo pathway; UDP from UMP (UMPK route): step 1/1. Inhibited by UTP. Functionally, catalyzes the reversible phosphorylation of UMP to UDP. The sequence is that of Uridylate kinase from Ectopseudomonas mendocina (strain ymp) (Pseudomonas mendocina).